The primary structure comprises 158 residues: Peptide methionine sulfoxide reductase MsrA (158 aa).

Residue cysteine 10 is part of the active site.

It belongs to the MsrA Met sulfoxide reductase family.

The enzyme catalyses L-methionyl-[protein] + [thioredoxin]-disulfide + H2O = L-methionyl-(S)-S-oxide-[protein] + [thioredoxin]-dithiol. The catalysed reaction is [thioredoxin]-disulfide + L-methionine + H2O = L-methionine (S)-S-oxide + [thioredoxin]-dithiol. Functionally, has an important function as a repair enzyme for proteins that have been inactivated by oxidation. Catalyzes the reversible oxidation-reduction of methionine sulfoxide in proteins to methionine. The sequence is that of Peptide methionine sulfoxide reductase MsrA from Alkaliphilus metalliredigens (strain QYMF).